The chain runs to 445 residues: tRNA modification GTPase MnmE (445 aa).

The (6S)-5-formyl-5,6,7,8-tetrahydrofolate site is built by arginine 20, glutamate 79, and lysine 119. The 157-residue stretch at 215–371 (GLKLAIIGPP…ILKNIEEIAE (157 aa)) folds into the TrmE-type G domain. Position 225 (asparagine 225) interacts with K(+). Residues 225–230 (NAGKSS), 244–250 (SNIAGTT), and 269–272 (DTAG) contribute to the GTP site. Serine 229 serves as a coordination point for Mg(2+). K(+) is bound by residues serine 244, isoleucine 246, and threonine 249. Threonine 250 is a binding site for Mg(2+). Lysine 445 provides a ligand contact to (6S)-5-formyl-5,6,7,8-tetrahydrofolate.

Belongs to the TRAFAC class TrmE-Era-EngA-EngB-Septin-like GTPase superfamily. TrmE GTPase family. In terms of assembly, homodimer. Heterotetramer of two MnmE and two MnmG subunits. The cofactor is K(+).

The protein localises to the cytoplasm. Exhibits a very high intrinsic GTPase hydrolysis rate. Involved in the addition of a carboxymethylaminomethyl (cmnm) group at the wobble position (U34) of certain tRNAs, forming tRNA-cmnm(5)s(2)U34. The protein is tRNA modification GTPase MnmE of Rickettsia bellii (strain RML369-C).